Consider the following 929-residue polypeptide: Ribonucleoside-diphosphate reductase large chain (929 aa).

The ATP-cone domain maps to 1–92; it reads MYVKKRDGRQ…VSNLHKQTKK (92 aa). ATP is bound by residues 5–6, 11–17, threonine 53, and aspartate 57; these read KR and ERVQFDK. GDP contacts are provided by serine 202 and serine 217. Cysteines 218 and 444 form a disulfide. Residues 226–228, lysine 243, arginine 256, and 263–264 contribute to the dTTP site; these read DSI and AG. Asparagine 427 is a binding site for GDP. Asparagine 427 (proton acceptor) is an active-site residue. Residue cysteine 429 is the Cysteine radical intermediate of the active site. Residues glutamate 431 and 605–608 each bind GDP; that span reads TAST. The active-site Proton acceptor is glutamate 431. A disordered region spans residues 789–904; the sequence is ENTSGPRPYA…RDENIYSNAP (116 aa). The segment covering 800–809 has biased composition (polar residues); sequence TGVSGTSTPI. Residues 868 to 884 show a composition bias toward basic and acidic residues; the sequence is VKTEDIGSPLLERKEGQ. The segment covering 885 to 894 has biased composition (acidic residues); that stretch reads NEDVDEDSQE.

Belongs to the ribonucleoside diphosphate reductase large chain family.

The catalysed reaction is a 2'-deoxyribonucleoside 5'-diphosphate + [thioredoxin]-disulfide + H2O = a ribonucleoside 5'-diphosphate + [thioredoxin]-dithiol. Under complex allosteric control mediated by deoxynucleoside triphosphates and ATP binding to separate specificity and activation sites on the large subunit. The type of nucleotide bound at the specificity site determines substrate preference. It seems probable that ATP makes the enzyme reduce CDP and UDP, dGTP favors ADP reduction and dTTP favors GDP reduction. Stimulated by ATP and inhibited by dATP binding to the activity site. Its function is as follows. Provides the precursors necessary for DNA synthesis. Catalyzes the biosynthesis of deoxyribonucleotides from the corresponding ribonucleotides. The sequence is that of Ribonucleoside-diphosphate reductase large chain (rnr-1) from Neurospora crassa (strain ATCC 24698 / 74-OR23-1A / CBS 708.71 / DSM 1257 / FGSC 987).